Consider the following 109-residue polypeptide: Death-associated protein-like 1 homolog (109 aa).

Disordered regions lie at residues 1–51 and 76–100; these read MVQL…KPRS and FPETPVSVRHSRVRPSVEKPHISRI. Over residues 31–50 the composition is skewed to basic and acidic residues; that stretch reads KSADENANVEKETRKTDKPR.

Belongs to the DAP-DAPL1 family. As to quaternary structure, associates with ribosomes; preventing translation. Interacts with eiF5a (eif5a and eif5a2); preventing translation.

Ribosome-binding protein that promotes ribosome hibernation, a process during which ribosomes are stabilized in an inactive state and preserved from proteasomal degradation. Acts via its association with eiF5a (eif5a and eif5a2) at the polypeptide exit tunnel of the ribosome, preventing mRNA translation. Plays a key role in ribosome hibernation in the mature egg by preventing mRNA translation, leading to ribosome inactivation. Ribosomes, which are produced in large quantities during oogenesis, are stored and translationally repressed in the egg and early embryo. The protein is Death-associated protein-like 1 homolog of Danio rerio (Zebrafish).